We begin with the raw amino-acid sequence, 741 residues long: Wall-associated receptor kinase 3 (741 aa).

The N-terminal stretch at 1–23 (MKFQEGVFLVVIFFLAYTQLVKG) is a signal peptide. The Extracellular portion of the chain corresponds to 24–342 (QHQPREDCKL…CTRPEYKRTR (319 aa)). N-linked (GlcNAc...) asparagine glycans are attached at residues Asn-37, Asn-59, Asn-78, Asn-100, Asn-103, Asn-141, Asn-192, Asn-199, Asn-232, Asn-246, Asn-261, and Asn-266. The EGF-like 1 domain occupies 245–292 (GNQTCEQAGSTRICGKNSSCYNSTTRNGYICKCNEGYDGNPYRSEGCK). 6 disulfides stabilise this stretch: Cys-249–Cys-264, Cys-258–Cys-275, Cys-277–Cys-291, Cys-297–Cys-310, Cys-304–Cys-319, and Cys-321–Cys-333. The EGF-like 2; calcium-binding domain occupies 293–334 (DIDECISDTHNCSDPKTCRNRDGGFDCKCPSGYDLNSSMSCT). Asn-303 carries an N-linked (GlcNAc...) asparagine glycan. N-linked (GlcNAc...) asparagine glycosylation occurs at Asn-328. The chain crosses the membrane as a helical span at residues 343–363 (IFLVIIIGVLVLLLAAICIQH). Topologically, residues 364–741 (ATKQRKYTKL…VAILDIETGR (378 aa)) are cytoplasmic. A Phosphothreonine modification is found at Thr-404. The Protein kinase domain maps to 415–698 (YDESRILGQG…RVEKTKHKWS (284 aa)). ATP contacts are provided by residues 421 to 429 (LGQGGQGTV) and Lys-443. Tyr-488 carries the phosphotyrosine modification. The Proton acceptor role is filled by Asp-540. Thr-574 and Thr-579 each carry phosphothreonine. A Phosphotyrosine modification is found at Tyr-587.

It belongs to the protein kinase superfamily. Ser/Thr protein kinase family. Predominantly expressed in green tissues such as stems and leaves.

The protein resides in the membrane. The catalysed reaction is L-seryl-[protein] + ATP = O-phospho-L-seryl-[protein] + ADP + H(+). It carries out the reaction L-threonyl-[protein] + ATP = O-phospho-L-threonyl-[protein] + ADP + H(+). Serine/threonine-protein kinase that may function as a signaling receptor of extracellular matrix component. Binding to pectin may have significance in the control of cell expansion, morphogenesis and development. The polypeptide is Wall-associated receptor kinase 3 (WAK3) (Arabidopsis thaliana (Mouse-ear cress)).